The sequence spans 190 residues: MKKLFLIIGAPGSGKTTDAQIIARDNADSIVHYSTGDLLREEVASGSEYGKTIDSFISKGNLVPLDIVVGTIINAIANAPKDVIIIDGYPRSIEQMEALDEKLKAQNQVQLVSVIEVEVSESVARERVLGRARGADDNVEVFNNRMQVYLTPLKDIETFYSKQKVLHKINGERMIEEIVSEMESFIKGKM.

An ATP-binding site is contributed by 12–17; the sequence is GSGKTT. The NMP stretch occupies residues 34–63; it reads STGDLLREEVASGSEYGKTIDSFISKGNLV. AMP contacts are provided by residues Thr35, Arg40, 61-63, 88-91, and Gln95; these read NLV and GYPR. Positions 130–136 are LID; it reads GRARGAD. Residue Arg131 coordinates ATP. The AMP site is built by Arg133 and Arg145. Residue Arg173 participates in ATP binding.

It belongs to the adenylate kinase family. Monomer.

It localises to the cytoplasm. The catalysed reaction is AMP + ATP = 2 ADP. The protein operates within purine metabolism; AMP biosynthesis via salvage pathway; AMP from ADP: step 1/1. Functionally, catalyzes the reversible transfer of the terminal phosphate group between ATP and AMP. Plays an important role in cellular energy homeostasis and in adenine nucleotide metabolism. The sequence is that of Adenylate kinase from Helicobacter hepaticus (strain ATCC 51449 / 3B1).